The following is a 427-amino-acid chain: Serine hydroxymethyltransferase (427 aa).

Position 120-122 (120-122) interacts with (6S)-5,6,7,8-tetrahydrofolate; sequence GHI. Residue K226 is modified to N6-(pyridoxal phosphate)lysine.

The protein belongs to the SHMT family. As to quaternary structure, homodimer. The cofactor is pyridoxal 5'-phosphate.

Its subcellular location is the cytoplasm. It participates in amino-acid biosynthesis; glycine biosynthesis; glycine from L-serine: step 1/1. Its function is as follows. Catalyzes the reversible interconversion of serine and glycine with a modified folate serving as the one-carbon carrier. Also exhibits a pteridine-independent aldolase activity toward beta-hydroxyamino acids, producing glycine and aldehydes, via a retro-aldol mechanism. The polypeptide is Serine hydroxymethyltransferase (Pyrococcus furiosus (strain ATCC 43587 / DSM 3638 / JCM 8422 / Vc1)).